The sequence spans 363 residues: Electron transfer flavoprotein subunit alpha, mitochondrial (363 aa).

A mitochondrion-targeting transit peptide spans 1–24; sequence MTRTVLLRALTKNKFVASNAPRSI. 303–331 contacts FAD; it reads LYMAFGVSGAIQHLAGIKDSKVIVAVNKD.

Belongs to the ETF alpha-subunit/FixB family. Heterodimer of an alpha and a beta subunit. FAD is required as a cofactor.

The protein resides in the mitochondrion matrix. Functionally, the electron transfer flavoprotein serves as a specific electron acceptor for several dehydrogenases, including five acyl-CoA dehydrogenases, glutaryl-CoA and sarcosine dehydrogenase. It transfers the electrons to the main mitochondrial respiratory chain via ETF-ubiquinone oxidoreductase (ETF dehydrogenase). Involved in leucine catabolism and in phytol degradation. This chain is Electron transfer flavoprotein subunit alpha, mitochondrial (ETFA), found in Arabidopsis thaliana (Mouse-ear cress).